A 208-amino-acid chain; its full sequence is Holliday junction branch migration complex subunit RuvA (208 aa).

A domain I region spans residues 1 to 67; the sequence is MIGWLHGTIG…EDGQQLYGFE (67 aa). Residues 68-146 are domain II; that stretch reads TKADRNLFRL…ERWQQQGGST (79 aa). The segment at 147 to 157 is flexible linker; the sequence is PLRLVEPVAES. A domain III region spans residues 157–208; the sequence is SRELRATLEALGYGPEEVSAAVAQAGSQGLDPEQPMEEWLRHCLAWLSRQAG.

This sequence belongs to the RuvA family. As to quaternary structure, homotetramer. Forms an RuvA(8)-RuvB(12)-Holliday junction (HJ) complex. HJ DNA is sandwiched between 2 RuvA tetramers; dsDNA enters through RuvA and exits via RuvB. An RuvB hexamer assembles on each DNA strand where it exits the tetramer. Each RuvB hexamer is contacted by two RuvA subunits (via domain III) on 2 adjacent RuvB subunits; this complex drives branch migration. In the full resolvosome a probable DNA-RuvA(4)-RuvB(12)-RuvC(2) complex forms which resolves the HJ.

Its subcellular location is the cytoplasm. In terms of biological role, the RuvA-RuvB-RuvC complex processes Holliday junction (HJ) DNA during genetic recombination and DNA repair, while the RuvA-RuvB complex plays an important role in the rescue of blocked DNA replication forks via replication fork reversal (RFR). RuvA specifically binds to HJ cruciform DNA, conferring on it an open structure. The RuvB hexamer acts as an ATP-dependent pump, pulling dsDNA into and through the RuvAB complex. HJ branch migration allows RuvC to scan DNA until it finds its consensus sequence, where it cleaves and resolves the cruciform DNA. The protein is Holliday junction branch migration complex subunit RuvA of Synechococcus sp. (strain RCC307).